A 172-amino-acid chain; its full sequence is Protein PLASTID REDOX INSENSITIVE 2, chloroplastic (172 aa).

The transit peptide at 1–54 (MAARLWAAAVAPATLNPPLLTLSASSSPSSSRLRRSVLGRLRSRAPRPADFVCR) directs the protein to the chloroplast.

It localises to the plastid. The protein localises to the chloroplast stroma. The protein resides in the chloroplast nucleoid. Functionally, required for the activity of the plastid-encoded RNA polymerase (PEP) and full expression of genes transcribed by PEP. The sequence is that of Protein PLASTID REDOX INSENSITIVE 2, chloroplastic from Oryza sativa subsp. japonica (Rice).